The sequence spans 188 residues: Protein crossbronx-like (188 aa).

Residues 15–174 form the UBC core domain; sequence KQGYHILAEY…ANQVVKLHCG (160 aa).

This sequence belongs to the ubiquitin-conjugating enzyme family. FTS subfamily.

The chain is Protein crossbronx-like from Drosophila simulans (Fruit fly).